The sequence spans 342 residues: Protein BASIC PENTACYSTEINE6 (342 aa).

A coiled-coil region spans residues Ala41 to Asp67. The segment at Ala41–Ala76 is alanine-zipper. A disordered region spans residues Arg143–Asp199. The required for nucleus and nucleolus localization stretch occupies residues Ala164–Lys195. The span at Arg185–Lys194 shows a compositional bias: basic residues. Residues Lys192–Lys195 carry the Nuclear localization signal motif.

Belongs to the BBR/BPC family. In terms of assembly, homodimer. Heterodimer with BPC4. As to expression, expressed in seedlings, leaves and pistils. Detected in the base of flowers and tips of carpels, in sepal vasculature, in young rosette, in the lateral and tip of primary roots, and in ovule at the exception of the outer integument.

Its subcellular location is the nucleus. The protein localises to the nucleolus. Functionally, transcriptional regulator that specifically binds to GA-rich elements (GAGA-repeats) present in regulatory sequences of genes involved in developmental processes. In Arabidopsis thaliana (Mouse-ear cress), this protein is Protein BASIC PENTACYSTEINE6 (BPC6).